The sequence spans 214 residues: Histidine biosynthesis bifunctional protein HisIE (214 aa).

Residues 1-125 form a phosphoribosyl-AMP cyclohydrolase region; that stretch reads MPATALSLPL…ESIEPPPADT (125 aa). The tract at residues 126–214 is phosphoribosyl-ATP pyrophosphohydrolase; it reads LSQVYNIVCQ…VYEQLQLRRR (89 aa).

The protein in the N-terminal section; belongs to the PRA-CH family. In the C-terminal section; belongs to the PRA-PH family.

The protein resides in the cytoplasm. The enzyme catalyses 1-(5-phospho-beta-D-ribosyl)-ATP + H2O = 1-(5-phospho-beta-D-ribosyl)-5'-AMP + diphosphate + H(+). It catalyses the reaction 1-(5-phospho-beta-D-ribosyl)-5'-AMP + H2O = 1-(5-phospho-beta-D-ribosyl)-5-[(5-phospho-beta-D-ribosylamino)methylideneamino]imidazole-4-carboxamide. It participates in amino-acid biosynthesis; L-histidine biosynthesis; L-histidine from 5-phospho-alpha-D-ribose 1-diphosphate: step 2/9. Its pathway is amino-acid biosynthesis; L-histidine biosynthesis; L-histidine from 5-phospho-alpha-D-ribose 1-diphosphate: step 3/9. This Thermosynechococcus vestitus (strain NIES-2133 / IAM M-273 / BP-1) protein is Histidine biosynthesis bifunctional protein HisIE.